Here is a 249-residue protein sequence, read N- to C-terminus: 5'-nucleotidase SurE (249 aa).

A divalent metal cation is bound by residues Asp9, Asp10, Ser40, and Asn92.

The protein belongs to the SurE nucleotidase family. A divalent metal cation is required as a cofactor.

The protein localises to the cytoplasm. It carries out the reaction a ribonucleoside 5'-phosphate + H2O = a ribonucleoside + phosphate. Its function is as follows. Nucleotidase that shows phosphatase activity on nucleoside 5'-monophosphates. The sequence is that of 5'-nucleotidase SurE from Shewanella baltica (strain OS223).